We begin with the raw amino-acid sequence, 262 residues long: Acyl-[acyl-carrier-protein]--UDP-N-acetylglucosamine O-acyltransferase (262 aa).

Belongs to the transferase hexapeptide repeat family. LpxA subfamily. In terms of assembly, homotrimer.

The protein resides in the cytoplasm. The catalysed reaction is a (3R)-hydroxyacyl-[ACP] + UDP-N-acetyl-alpha-D-glucosamine = a UDP-3-O-[(3R)-3-hydroxyacyl]-N-acetyl-alpha-D-glucosamine + holo-[ACP]. Its pathway is glycolipid biosynthesis; lipid IV(A) biosynthesis; lipid IV(A) from (3R)-3-hydroxytetradecanoyl-[acyl-carrier-protein] and UDP-N-acetyl-alpha-D-glucosamine: step 1/6. Functionally, involved in the biosynthesis of lipid A, a phosphorylated glycolipid that anchors the lipopolysaccharide to the outer membrane of the cell. The chain is Acyl-[acyl-carrier-protein]--UDP-N-acetylglucosamine O-acyltransferase from Burkholderia orbicola (strain MC0-3).